Reading from the N-terminus, the 122-residue chain is Holo-[acyl-carrier-protein] synthase (122 aa).

Mg(2+) is bound by residues aspartate 9 and glutamate 58.

It belongs to the P-Pant transferase superfamily. AcpS family. Mg(2+) serves as cofactor.

The protein resides in the cytoplasm. It catalyses the reaction apo-[ACP] + CoA = holo-[ACP] + adenosine 3',5'-bisphosphate + H(+). In terms of biological role, transfers the 4'-phosphopantetheine moiety from coenzyme A to a Ser of acyl-carrier-protein. In Chlamydia pneumoniae (Chlamydophila pneumoniae), this protein is Holo-[acyl-carrier-protein] synthase.